We begin with the raw amino-acid sequence, 83 residues long: Small ribosomal subunit protein eS27 (83 aa).

The segment at 37–59 adopts a C4-type zinc-finger fold; the sequence is CPGCFNITTVFSHAQTVVICGSC.

The protein belongs to the eukaryotic ribosomal protein eS27 family. In terms of assembly, component of the small ribosomal subunit (SSU). Mature yeast ribosomes consist of a small (40S) and a large (60S) subunit. The 40S small subunit contains 1 molecule of ribosomal RNA (18S rRNA) and at least 33 different proteins. The large 60S subunit contains 3 rRNA molecules (25S, 5.8S and 5S rRNA) and at least 46 different proteins. Zn(2+) is required as a cofactor.

The protein localises to the cytoplasm. In terms of biological role, component of the ribosome, a large ribonucleoprotein complex responsible for the synthesis of proteins in the cell. The small ribosomal subunit (SSU) binds messenger RNAs (mRNAs) and translates the encoded message by selecting cognate aminoacyl-transfer RNA (tRNA) molecules. The large subunit (LSU) contains the ribosomal catalytic site termed the peptidyl transferase center (PTC), which catalyzes the formation of peptide bonds, thereby polymerizing the amino acids delivered by tRNAs into a polypeptide chain. The nascent polypeptides leave the ribosome through a tunnel in the LSU and interact with protein factors that function in enzymatic processing, targeting, and the membrane insertion of nascent chains at the exit of the ribosomal tunnel. The polypeptide is Small ribosomal subunit protein eS27 (rps27) (Schizosaccharomyces pombe (strain 972 / ATCC 24843) (Fission yeast)).